A 170-amino-acid chain; its full sequence is Neurotensin/neuromedin N (170 aa).

Residues 1–23 (MMAGMKIQLVCMILLAFSSWSLC) form the signal peptide.

Belongs to the neurotensin family. Interacts with NTSR1. Interacts with SORT1. Interacts with SORL1. Neurotensin is cleaved and degraded by Angiotensin-converting enzyme (ACE) and neprilysin (MME).

It is found in the secreted. It localises to the cytoplasmic vesicle. The protein localises to the secretory vesicle. In terms of biological role, neurotensin may play an endocrine or paracrine role in the regulation of fat metabolism. It causes contraction of smooth muscle. This is Neurotensin/neuromedin N (NTS) from Canis lupus familiaris (Dog).